Consider the following 115-residue polypeptide: Large ribosomal subunit protein bL20c (115 aa).

Belongs to the bacterial ribosomal protein bL20 family.

It is found in the plastid. Its subcellular location is the chloroplast. Binds directly to 23S ribosomal RNA and is necessary for the in vitro assembly process of the 50S ribosomal subunit. It is not involved in the protein synthesizing functions of that subunit. This chain is Large ribosomal subunit protein bL20c, found in Chlorokybus atmophyticus (Soil alga).